Reading from the N-terminus, the 364-residue chain is MSLYRKRLKIVRGEGIYVWDSEGKRYLDLIAGIGVAILGHNHPKWVEEVGNQLNKLVVAGPMFEHEEKEEMLEELSRWVNFEYVYMGNSGTEAVEAALKFARLYTGRKEIIAMTNAFHGRTMGALSATWKSKYKKDFEPLVPGFKHIPFNDVEAAKEAITRTTAAVIFEPIQGESGIIPAKEEFVKTLRDLTEDVGALLIADEVQSGLRTGKFLAVEHYKVEPDIVTLGKGIGNGVPVSLTLTNFDVERGKHGSTFGGNPLACKAVAVTLRILRKERLVEKASEKFIKVKGKDVVTTRGRGLMIGIVLKKPVGRYVEELQNEGYLVHTSGQRVIRLLPPLIISKEKMMEVKSAIEGVINGDTEG.

Residues 90 to 91 and phenylalanine 117 contribute to the pyridoxal 5'-phosphate site; that span reads GT. Arginine 120 serves as a coordination point for substrate. Pyridoxal 5'-phosphate is bound at residue 202-205; that stretch reads DEVQ. Lysine 230 is modified (N6-(pyridoxal phosphate)lysine). Substrate is bound at residue serine 254. Threonine 255 provides a ligand contact to pyridoxal 5'-phosphate.

Belongs to the class-III pyridoxal-phosphate-dependent aminotransferase family. LysJ subfamily. Homodimer. It depends on pyridoxal 5'-phosphate as a cofactor.

Its subcellular location is the cytoplasm. It catalyses the reaction [amino-group carrier protein]-C-terminal-gamma-(L-lysyl)-L-glutamate + 2-oxoglutarate = [amino-group carrier protein]-C-terminal-N-(1-carboxy-5-oxopentan-1-yl)-L-glutamine + L-glutamate. The catalysed reaction is [amino-group carrier protein]-C-terminal-gamma-(L-ornithyl)-L-glutamate + 2-oxoglutarate = [amino-group carrier protein]-C-terminal-gamma-(L-glutamyl-5-semialdehyde)-L-glutamate + L-glutamate. The protein operates within amino-acid biosynthesis; L-lysine biosynthesis via AAA pathway; L-lysine from L-alpha-aminoadipate (Thermus route): step 4/5. Its pathway is amino-acid biosynthesis; L-arginine biosynthesis. Functionally, involved in both the arginine and lysine biosynthetic pathways. This chain is Putative [LysW]-aminoadipate semialdehyde/glutamate semialdehyde transaminase, found in Pyrococcus abyssi (strain GE5 / Orsay).